Here is a 198-residue protein sequence, read N- to C-terminus: Recombination protein RecR (198 aa).

Residues 57–72 (CSECGHITEQDPCYIC) form a C4-type zinc finger. The Toprim domain maps to 80–175 (SVICVVEDDK…TVTRLAQGLS (96 aa)).

It belongs to the RecR family.

Functionally, may play a role in DNA repair. It seems to be involved in an RecBC-independent recombinational process of DNA repair. It may act with RecF and RecO. This Staphylococcus saprophyticus subsp. saprophyticus (strain ATCC 15305 / DSM 20229 / NCIMB 8711 / NCTC 7292 / S-41) protein is Recombination protein RecR.